The chain runs to 82 residues: Acyl carrier protein (82 aa).

The Carrier domain maps to glutamine 3–valine 78. Serine 38 is modified (O-(pantetheine 4'-phosphoryl)serine).

It belongs to the acyl carrier protein (ACP) family. In terms of processing, 4'-phosphopantetheine is transferred from CoA to a specific serine of apo-ACP by AcpS. This modification is essential for activity because fatty acids are bound in thioester linkage to the sulfhydryl of the prosthetic group.

It localises to the cytoplasm. The protein operates within lipid metabolism; fatty acid biosynthesis. Carrier of the growing fatty acid chain in fatty acid biosynthesis. This is Acyl carrier protein from Gloeothece citriformis (strain PCC 7424) (Cyanothece sp. (strain PCC 7424)).